A 426-amino-acid chain; its full sequence is Phosphomethylpyrimidine synthase (426 aa).

Residues asparagine 65, methionine 94, tyrosine 123, histidine 162, 184 to 186, 225 to 228, and glutamate 264 each bind substrate; these read SRG and DGMR. Position 268 (histidine 268) interacts with Zn(2+). Substrate is bound at residue tyrosine 291. Histidine 332 lines the Zn(2+) pocket. Cysteine 408, cysteine 411, and cysteine 415 together coordinate [4Fe-4S] cluster.

It belongs to the ThiC family. [4Fe-4S] cluster is required as a cofactor.

It catalyses the reaction 5-amino-1-(5-phospho-beta-D-ribosyl)imidazole + S-adenosyl-L-methionine = 4-amino-2-methyl-5-(phosphooxymethyl)pyrimidine + CO + 5'-deoxyadenosine + formate + L-methionine + 3 H(+). It functions in the pathway cofactor biosynthesis; thiamine diphosphate biosynthesis. Functionally, catalyzes the synthesis of the hydroxymethylpyrimidine phosphate (HMP-P) moiety of thiamine from aminoimidazole ribotide (AIR) in a radical S-adenosyl-L-methionine (SAM)-dependent reaction. This is Phosphomethylpyrimidine synthase from Methanococcus maripaludis (strain C6 / ATCC BAA-1332).